Reading from the N-terminus, the 412-residue chain is Putative gustatory receptor 58c (412 aa).

Transmembrane regions (helical) follow at residues 39 to 59 and 72 to 92; these read VVYC…ALFV and MFGV…LFLM. Asn-158 is a glycosylation site (N-linked (GlcNAc...) asparagine). A helical transmembrane segment spans residues 173 to 193; the sequence is IVYALIMILLMSYVDMTVYMV. Asn-203 carries an N-linked (GlcNAc...) asparagine glycan. 3 helical membrane passes run 224-241, 262-282, and 296-316; these read IPRE…RKLW, VLFN…RLWI, and ILYA…FSIF. 3 N-linked (GlcNAc...) asparagine glycosylation sites follow: Asn-337, Asn-386, and Asn-391.

It belongs to the insect chemoreceptor superfamily. Gustatory receptor (GR) family. Gr10a subfamily.

Its subcellular location is the cell membrane. In terms of biological role, probable gustatory receptor which mediates acceptance or avoidance behavior, depending on its substrates. The polypeptide is Putative gustatory receptor 58c (Gr58c) (Drosophila melanogaster (Fruit fly)).